The following is a 316-amino-acid chain: tRNA selenocysteine 1-associated protein 1-like (316 aa).

RRM domains follow at residues 6–89 and 99–178; these read TSLW…YATY and FSVF…IAVN. Pro residues predominate over residues 239-248; sequence PPMGMPPMPP. Residues 239–285 form a disordered region; sequence PPMGMPPMPPDMQGSTEAHDGTEEVEEDPSEDPNPQVDVEELNRQYM.

It belongs to the RRM TRSPAP family.

It is found in the nucleus. The protein resides in the cytoplasm. Its function is as follows. Involved in the early steps of selenocysteine biosynthesis and tRNA(Sec) charging to the later steps resulting in the cotranslational incorporation of selenocysteine into selenoproteins. The polypeptide is tRNA selenocysteine 1-associated protein 1-like (trnau1apl) (Danio rerio (Zebrafish)).